The chain runs to 254 residues: ATP synthase subunit a (254 aa).

A propeptide spans Met-1–His-6 (removed in mature form). 7 helical membrane-spanning segments follow: residues Leu-32 to Met-52, Ile-83 to Ile-103, Ser-119 to Leu-139, Phe-146 to Ile-166, Leu-182 to Pro-202, Thr-207 to Leu-227, and Glu-228 to Lys-248.

The protein belongs to the ATPase A chain family. As to quaternary structure, F-type ATPases have 2 components, CF(1) - the catalytic core - and CF(0) - the membrane proton channel. CF(1) has five subunits: alpha(3), beta(3), gamma(1), delta(1), epsilon(1). CF(0) has three main subunits: a, b and c.

Its subcellular location is the mitochondrion inner membrane. Its function is as follows. Mitochondrial membrane ATP synthase (F(1)F(0) ATP synthase or Complex V) produces ATP from ADP in the presence of a proton gradient across the membrane which is generated by electron transport complexes of the respiratory chain. F-type ATPases consist of two structural domains, F(1) - containing the extramembraneous catalytic core and F(0) - containing the membrane proton channel, linked together by a central stalk and a peripheral stalk. During catalysis, ATP synthesis in the catalytic domain of F(1) is coupled via a rotary mechanism of the central stalk subunits to proton translocation. Key component of the proton channel; it may play a direct role in the translocation of protons across the membrane. The sequence is that of ATP synthase subunit a (ATP6) from Mycosarcoma maydis (Corn smut fungus).